A 132-amino-acid chain; its full sequence is Transmembrane protein 170B (132 aa).

Residues 1–37 (MKAEGGDHSMINLSVQQVLSLWAHGTVLRNLTEMWYW) are Extracellular-facing. Asn12 carries an N-linked (GlcNAc...) asparagine glycan. Residues 38–58 (IFLWALFSSLFVHGAAGVLMF) form a helical membrane-spanning segment. Over 59–68 (VMLQRHRQGR) the chain is Cytoplasmic. Residues 69–89 (VISVIAVSIGFLASVTGAMIT) form a helical membrane-spanning segment. Residues 90-104 (SAAVAGIYRVAGKNM) are Extracellular-facing. Residues 105 to 125 (APLEALVWGVGQTVLTLIISF) form a helical membrane-spanning segment. Residues 126 to 132 (SRILATL) are Cytoplasmic-facing.

This sequence belongs to the TMEM170 family. As to quaternary structure, interacts with CTNNB1. As to expression, expressed in normal breast tissues. Down-regulated in breast cancer cells (at protein level).

The protein localises to the cell membrane. Functionally, negatively regulates the canonical Wnt signaling in breast cancer cells. Exerts an inhibitory effect on breast cancer growth by inhibiting CTNNB1 stabilization and nucleus translocation, which reduces the activity of Wnt targets. The protein is Transmembrane protein 170B (TMEM170B) of Homo sapiens (Human).